Consider the following 185-residue polypeptide: Prorelaxin H1 (185 aa).

The N-terminal stretch at 1–22 (MPRLFLFHLLEFCLLLNQFSRA) is a signal peptide. 3 disulfides stabilise this stretch: C35–C172, C47–C185, and C171–C176. The propeptide at 56 to 158 (SLSQEDAPQT…KYLGLDTHSQ (103 aa)) is connecting peptide.

This sequence belongs to the insulin family. In terms of assembly, heterodimer of a B chain and an A chain linked by two disulfide bonds. In terms of tissue distribution, prostate. Not expressed in placenta, decidua or ovary.

It localises to the secreted. In terms of biological role, relaxin is an ovarian hormone that acts with estrogen to produce dilatation of the birth canal in many mammals. May be involved in remodeling of connective tissues during pregnancy, promoting growth of pubic ligaments and ripening of the cervix. The protein is Prorelaxin H1 (RLN1) of Homo sapiens (Human).